The following is a 539-amino-acid chain: Gamma-2-syntrophin (539 aa).

The region spanning 73–156 (TVTLRRQPVG…DVTITVEYLR (84 aa)) is the PDZ domain. One can recognise a PH domain in the interval 296-421 (QVVHMGWVNE…WEKAFQRATF (126 aa)).

The protein belongs to the syntrophin family. Interacts with the dystrophin protein DMD and related proteins DTNA and DTNB.

The protein resides in the cell membrane. Its subcellular location is the sarcolemma. The protein localises to the cytoplasm. It is found in the cytoskeleton. Its function is as follows. Adapter protein that binds to and probably organizes the subcellular localization of a variety of proteins. May link various receptors to the actin cytoskeleton and the dystrophin glycoprotein complex. In Mus musculus (Mouse), this protein is Gamma-2-syntrophin (Sntg2).